The chain runs to 437 residues: Aminopeptidase W (437 aa).

Active-site residues include Cys70, His361, and Asn382.

The protein belongs to the peptidase C1 family.

Its subcellular location is the cytoplasm. This Lactobacillus delbrueckii subsp. lactis protein is Aminopeptidase W (pepW).